Here is a 228-residue protein sequence, read N- to C-terminus: Probable 26S proteasome regulatory subunit p28 (228 aa).

6 ANK repeats span residues 1–30 (MSNYPLHQACMENEFFKVQELLHSKPSLLL), 35–64 (DGRIPLHWSVSFQAHEITSFLLSKMENVNL), 71–100 (SGWTPFHIACSVGNLEVVKSLYDRPLKPDL), 106–135 (QGVTCLHLAVGKKWFEVSQFLIENGASVRI), 139–168 (FNQIPLHRAASVGSLKLIELLCGLGKSAVN), and 173–203 (QGWTPLFHALAEGHGDAAVLLVEKYGAEYDL).

In terms of assembly, interacts with RPT3.

Acts as a chaperone during the assembly of the 26S proteasome, specifically of the 19S regulatory complex (RC) and appears to have an overlapping role with RPN14. This chain is Probable 26S proteasome regulatory subunit p28 (NAS6), found in Saccharomyces cerevisiae (strain ATCC 204508 / S288c) (Baker's yeast).